We begin with the raw amino-acid sequence, 295 residues long: Cyclic dipyrimidine nucleotide synthase CdnE (295 aa).

Positions 1–25 (MSIDWEQTFRKWSKPSSETESTKAE) are disordered. Residues Q51, S53, and N59 each coordinate UTP. Positions 65 and 67 each coordinate Mg(2+). Residues D67, D124, and K125 each coordinate UTP. Residues D128 and D139 each contribute to the Mg(2+) site. D139, N173, K201, and S220 together coordinate UTP. Residues 274–276 (QMW) carry the Pyrimidine specificity motif (R/Q)xW in donor pocket motif.

The protein belongs to the CD-NTase family. E02 subfamily. Requires Mg(2+) as cofactor.

It carries out the reaction 2 UTP = c-di-UMP + 2 diphosphate. It catalyses the reaction UTP + CTP = cyclic CMP-UMP + 2 diphosphate. Cyclic nucleotide synthase (second messenger synthase) of a CBASS antivirus system. CBASS (cyclic oligonucleotide-based antiphage signaling system) provides immunity against bacteriophage. The CD-NTase protein synthesizes cyclic nucleotides in response to infection; these serve as specific second messenger signals. The signals activate a diverse range of effectors, leading to bacterial cell death and thus abortive phage infection. A type I-B(UU) CBASS system. In terms of biological role, cyclic dinucleotide synthase that catalyzes the synthesis of 3',3'-cyclic UMP-UMP (c-di-UMP) as the major product, and of 3',3'-cyclic CMP-UMP as a minor product, which are second messengers for cell signal transduction. The chain is Cyclic dipyrimidine nucleotide synthase CdnE from Legionella pneumophila.